A 489-amino-acid chain; its full sequence is MHYLAVALPLLTLALAAPSNSVPLTPLNSRQYSEDLAERQSWLLDQAKGLRSKYAPHLGERGQELRRRDIIDEGITRRKRANQKRATGTVSLTDVGLDASYAGQVSIGTPAQDFLVIMDSGSSDLWVAGSTCTENFCKQTYTFDTSTSSSFITSSEAFNITYGSGDADGTLGTDTVSMAGFTVSDQTFGVVTSTSANLISYPLSGLMGLAWKSIASSGATPFWQTLAASGDWDSPEMGVYLKRYRGDNTASQIETDGGQILFGGLNTSLYNGSVNYISIDESEKDYWRIPLEAMVIQGNSVSIASSSGGSNPSCAIDTGTTLIGVPSQTANRIYSQIAGAEALSASSGYEGYYQYPCDTEVTVSLQFGGMSYSISNADMNLGSFTRDTSMCTGAFFAMDMSSRSPVQWIVGASFIKNVYTAFRYNPAAIGFAELVGGSSVSAGNPSSSTTGGGTSGSNGGGSSSGAMERKGVQLGWLVGAVAVGVAAMI.

The signal sequence occupies residues 1–16 (MHYLAVALPLLTLALA). The 332-residue stretch at 101–432 (YAGQVSIGTP…RYNPAAIGFA (332 aa)) folds into the Peptidase A1 domain. Residue Asp-119 is part of the active site. Pepstatin A is bound at residue Gly-121. A disulfide bridge connects residues Cys-132 and Cys-137. 3 residues coordinate pepstatin A: Thr-161, Gly-163, and Ser-164. Asn-266 carries N-linked (GlcNAc...) asparagine glycosylation. Tyr-286 serves as a coordination point for pepstatin A. The active site involves Asp-317. Residues Thr-320 and Thr-321 each contribute to the pepstatin A site. An intrachain disulfide couples Cys-357 to Cys-391. Positions 442–466 (AGNPSSSTTGGGTSGSNGGGSSSGA) are disordered. Residues 450-463 (TGGGTSGSNGGGSS) are compositionally biased toward gly residues. Positions 456–489 (GSNGGGSSSGAMERKGVQLGWLVGAVAVGVAAMI) are cleaved as a propeptide — removed at pH 5.0; by autocatalysis.

The protein belongs to the peptidase A1 family. In terms of assembly, monomer. In terms of processing, activated by the autocatalytic cleavage of the propeptide. Cleaved at the end of the propeptide promiscuously from residue 76 to residue 79. C-terminal cleavage by autocatalysis at Gly-456 at the pH optimum indicating a possible regulatory or other function of this propeptide.

The protein resides in the secreted. With respect to regulation, activated by low pH. Inhibited by pepstatin A with an IC(50) of 1.4 nM. Inhibited by acetyl pepstatin. Inhibited by HIV antiretroviral therapy protease inhibitors including amprenavir and ritonavir. Inhibited by HIV-1 protease inhibitor brecanavir with an approximate IC(50) of 352 nM. Inhibited by HIV-1 protease inhibitors CGP53437 and GS-8374. From the tested peptidomimetic inhibitor molecules, macrocycles containing P2-P3' tethered side chains, statines in P1 and an alpha amino acid in P2' are the best. From the linear peptidomimetic inhibitors, the ones with a phenylstatine or hydroxyethylamine scissile bond isoster are better than compounds with a reduced bond or a homo-amide. Overall, inhibitors with a phenylalanine side chain, either unsubstituted or with a small substituent, is preferred in P1 while a bulkier P1 side chain leads to lower inhibition. In terms of biological role, possesses prevalent extracellular endopeptidase activity at low pH condition. Required for high-density growth in acidic environments. Broad substrate specificity with preference cleavage of the peptide substrate between hydrophobic amino acids. Cleaves substrate at P1-P1' between Phe-Leu. Positively charged amino acids are preferred at P2. Prefers hydrophobic amino acids at the P3 and P4 positions. Cleaves substrate also at P1'-P2' between Leu-Val to some degree. Required for virulence in mouse inhalation model of infection. This Cryptococcus neoformans var. grubii serotype A (strain H99 / ATCC 208821 / CBS 10515 / FGSC 9487) (Filobasidiella neoformans var. grubii) protein is Major aspartyl peptidase 1.